A 198-amino-acid polypeptide reads, in one-letter code: Recombination protein RecR (198 aa).

The C4-type zinc finger occupies 57 to 72 (CSVCGHITDRDPCYIC). The region spanning 80 to 175 (SVVCVVQEPK…KVTRIAHGLP (96 aa)) is the Toprim domain.

Belongs to the RecR family.

In terms of biological role, may play a role in DNA repair. It seems to be involved in an RecBC-independent recombinational process of DNA repair. It may act with RecF and RecO. The chain is Recombination protein RecR from Bacillus anthracis (strain A0248).